The following is a 498-amino-acid chain: MSQFILAIDQGTTSSRAILFNHEGQIHGVAQQEYPQIFPEPGWVEHDANAIWNSQLAVARQVLKENKLSATDIAAIGITNQRETTVIWDRKTGQPIANAIVWQDRRTAAYCDQLRAEGKADLFQQKTGLVLDSYFSGTKVKWLLDHIPDARARAERGELAFGTIDSWLVYKLSGAHLTDSSNASRTLLFNIHTLQWDEELLAIFDIPASLLPAVVASSGIASHTHTELFGAPIAIAGIAGDQQAATFGQACHKPGMAKNTYGTGCFMLLNTGTHAISSHNNLLTTIGWTLGIGKAAQTNYMLEGGVFMGGAIVQWLRDGLGIIQRSADVEALATSVPDNGGVVFVPAFSGLGAPYWDSYARGTILGMTRGSNKAHIARAALESIAYQSVDLLDAMQKDAQSSSQELRVDGGASRNDLLMQFQADILNVPVIRPVVTETTALGAAYLAGLAVSFWQSAEEITAQWKMDKRFEPAMSADEREQRLHTWHRAVERAQAWES.

T12 is a binding site for ADP. Residues T12, T13, and S14 each contribute to the ATP site. A sn-glycerol 3-phosphate-binding site is contributed by T12. R16 is an ADP binding site. Sn-glycerol 3-phosphate-binding residues include R82, E83, Y134, and D241. The glycerol site is built by R82, E83, Y134, D241, and Q242. 2 residues coordinate ADP: T263 and G310. The ATP site is built by T263, G310, Q314, and G411. ADP-binding residues include G411 and N415.

Belongs to the FGGY kinase family.

The catalysed reaction is glycerol + ATP = sn-glycerol 3-phosphate + ADP + H(+). It participates in polyol metabolism; glycerol degradation via glycerol kinase pathway; sn-glycerol 3-phosphate from glycerol: step 1/1. With respect to regulation, inhibited by fructose 1,6-bisphosphate (FBP). Key enzyme in the regulation of glycerol uptake and metabolism. Catalyzes the phosphorylation of glycerol to yield sn-glycerol 3-phosphate. The protein is Glycerol kinase of Janthinobacterium sp. (strain Marseille) (Minibacterium massiliensis).